We begin with the raw amino-acid sequence, 32 residues long: ilv operon leader peptide (32 aa).

The chain is ilv operon leader peptide (ilvL) from Edwardsiella tarda.